We begin with the raw amino-acid sequence, 395 residues long: Chaperone protein DnaJ (395 aa).

Residues 5-70 form the J domain; it reads DFYEVLGVDK…NKRAAYDRMG (66 aa). The CR-type zinc finger occupies 145–223; that stretch reads GKDETIKVPT…CDGVGRVRKT (79 aa). Zn(2+) contacts are provided by C158, C161, C175, C178, C197, C200, C211, and C214. CXXCXGXG motif repeat units follow at residues 158–165, 175–182, 197–204, and 211–218; these read CERCDGQG, CGTCQGAG, CPQCGGRG, and CNDCDGVG.

This sequence belongs to the DnaJ family. As to quaternary structure, homodimer. Requires Zn(2+) as cofactor.

It localises to the cytoplasm. Functionally, participates actively in the response to hyperosmotic and heat shock by preventing the aggregation of stress-denatured proteins and by disaggregating proteins, also in an autonomous, DnaK-independent fashion. Unfolded proteins bind initially to DnaJ; upon interaction with the DnaJ-bound protein, DnaK hydrolyzes its bound ATP, resulting in the formation of a stable complex. GrpE releases ADP from DnaK; ATP binding to DnaK triggers the release of the substrate protein, thus completing the reaction cycle. Several rounds of ATP-dependent interactions between DnaJ, DnaK and GrpE are required for fully efficient folding. Also involved, together with DnaK and GrpE, in the DNA replication of plasmids through activation of initiation proteins. This chain is Chaperone protein DnaJ, found in Maricaulis maris (strain MCS10) (Caulobacter maris).